A 317-amino-acid polypeptide reads, in one-letter code: Carbonic anhydrase 5B, mitochondrial (317 aa).

The transit peptide at 1-33 (MTVMSHLRVSLQVSSCTLLWRRFRVPRLVPLRS) directs the protein to the mitochondrion. The Alpha-carbonic anhydrase domain maps to 37 to 296 (YTCTYRTRNR…LMNRTVRSSF (260 aa)). Zn(2+) contacts are provided by His-130, His-132, and His-155. 235-236 (TT) provides a ligand contact to substrate.

Belongs to the alpha-carbonic anhydrase family. It depends on Zn(2+) as a cofactor.

Its subcellular location is the mitochondrion. The catalysed reaction is hydrogencarbonate + H(+) = CO2 + H2O. In terms of biological role, mitochondrial carbonic anhydrase that catalyzes the reversible conversion of carbon dioxide to bicarbonate/HCO3. The protein is Carbonic anhydrase 5B, mitochondrial (Ca5b) of Rattus norvegicus (Rat).